Here is a 565-residue protein sequence, read N- to C-terminus: Urocanate hydratase (565 aa).

NAD(+) contacts are provided by residues 61-62 (GG), Gln139, 185-187 (GMG), Glu205, Arg210, 251-252 (NA), 272-276 (QTSAH), 282-283 (YL), and Tyr331. Residue Cys419 is part of the active site. The segment at 453 to 472 (LDSGSVASPNRETESMRDGS) is disordered. Over residues 463–472 (RETESMRDGS) the composition is skewed to basic and acidic residues. An NAD(+)-binding site is contributed by Gly501.

This sequence belongs to the urocanase family. It depends on NAD(+) as a cofactor.

It localises to the cytoplasm. It carries out the reaction 4-imidazolone-5-propanoate = trans-urocanate + H2O. It participates in amino-acid degradation; L-histidine degradation into L-glutamate; N-formimidoyl-L-glutamate from L-histidine: step 2/3. Catalyzes the conversion of urocanate to 4-imidazolone-5-propionate. The protein is Urocanate hydratase of Pseudomonas savastanoi pv. phaseolicola (strain 1448A / Race 6) (Pseudomonas syringae pv. phaseolicola (strain 1448A / Race 6)).